A 323-amino-acid polypeptide reads, in one-letter code: tRNA dimethylallyltransferase (323 aa).

13–20 contacts ATP; the sequence is GPTASGKT. 15-20 serves as a coordination point for substrate; it reads TASGKT. 4 interaction with substrate tRNA regions span residues 42–45, 166–170, 251–256, and 284–291; these read DSAL, QRIQR, RCVGYR, and KRQITWLR.

Belongs to the IPP transferase family. In terms of assembly, monomer. Mg(2+) serves as cofactor.

The enzyme catalyses adenosine(37) in tRNA + dimethylallyl diphosphate = N(6)-dimethylallyladenosine(37) in tRNA + diphosphate. Catalyzes the transfer of a dimethylallyl group onto the adenine at position 37 in tRNAs that read codons beginning with uridine, leading to the formation of N6-(dimethylallyl)adenosine (i(6)A). This Acidovorax ebreus (strain TPSY) (Diaphorobacter sp. (strain TPSY)) protein is tRNA dimethylallyltransferase.